The primary structure comprises 131 residues: Holo-[acyl-carrier-protein] synthase (131 aa).

Asp-8 and Glu-57 together coordinate Mg(2+).

Belongs to the P-Pant transferase superfamily. AcpS family. Mg(2+) is required as a cofactor.

The protein resides in the cytoplasm. The catalysed reaction is apo-[ACP] + CoA = holo-[ACP] + adenosine 3',5'-bisphosphate + H(+). Its function is as follows. Transfers the 4'-phosphopantetheine moiety from coenzyme A to a Ser of acyl-carrier-protein. The chain is Holo-[acyl-carrier-protein] synthase from Thiobacillus denitrificans (strain ATCC 25259 / T1).